A 454-amino-acid polypeptide reads, in one-letter code: tRNA modification GTPase MnmE (454 aa).

(6S)-5-formyl-5,6,7,8-tetrahydrofolate-binding residues include arginine 23, glutamate 80, and lysine 120. One can recognise a TrmE-type G domain in the interval 216 to 377 (GMKVVIAGRP…LRDHLKQSMG (162 aa)). Asparagine 226 is a binding site for K(+). Residues 226–231 (NAGKSS), 245–251 (TDIAGTT), 270–273 (DTAG), 335–338 (NKAD), and 358–360 (SAR) contribute to the GTP site. Serine 230 contacts Mg(2+). Threonine 245, isoleucine 247, and threonine 250 together coordinate K(+). Threonine 251 is a binding site for Mg(2+). Residue lysine 454 participates in (6S)-5-formyl-5,6,7,8-tetrahydrofolate binding.

The protein belongs to the TRAFAC class TrmE-Era-EngA-EngB-Septin-like GTPase superfamily. TrmE GTPase family. As to quaternary structure, homodimer. Heterotetramer of two MnmE and two MnmG subunits. Requires K(+) as cofactor.

It is found in the cytoplasm. Exhibits a very high intrinsic GTPase hydrolysis rate. Involved in the addition of a carboxymethylaminomethyl (cmnm) group at the wobble position (U34) of certain tRNAs, forming tRNA-cmnm(5)s(2)U34. This Yersinia pestis bv. Antiqua (strain Antiqua) protein is tRNA modification GTPase MnmE.